We begin with the raw amino-acid sequence, 410 residues long: Phthiocerol/phthiodiolone dimycocerosyl transferase (410 aa).

The Proton acceptor role is filled by His-118.

The protein belongs to the acyltransferase PapA5 family. Monomer. Interacts directly with the acyl carrier protein (ACP) domain of the mycocerosic acid synthase (mas) protein.

It carries out the reaction 2 a mycocerosyl-[mycocerosic acid synthase] + a phthiocerol = a dimycocerosyl phthiocerol + 2 holo-[mycocerosic acid synthase].. The enzyme catalyses 2 a mycocerosyl-[mycocerosic acid synthase] + a phthiodiolone = a dimycocerosyl phthiodiolone + 2 holo-[mycocerosic acid synthase].. It catalyses the reaction 2 a mycocerosyl-[mycocerosic acid synthase] + a phenolphthiocerol = a dimycocerosyl phenolphthiocerol + 2 holo-[mycocerosic acid synthase].. Catalyzes diesterification of phthiocerol, phthiodiolone, and phenolphthiocerol with mycocerosic acids, the final step in the phthiocerol, phthiodiolone and phenolphthiocerol dimycocerosate esters (PDIM) synthesis. Can directly transfer the mycocerosate bound to the mycocerosic acid synthase (mas) onto the substrate alcohols. This Mycobacterium sp. (strain JLS) protein is Phthiocerol/phthiodiolone dimycocerosyl transferase (papA5).